The sequence spans 287 residues: Probable aquaporin PIP1-5 (287 aa).

Met-1 is subject to N-acetylmethionine. The segment at 1–34 (MEGKEEDVNVGANKFPERQPIGTAAQTESKDYKE) is disordered. The Cytoplasmic portion of the chain corresponds to 1-55 (MEGKEEDVNVGANKFPERQPIGTAAQTESKDYKEPPPAPFFEPGELKSWSFYRAG). The chain crosses the membrane as a helical span at residues 56–76 (IAEFIATFLFLYVTVLTVMGV). At 77 to 92 (KRAPNMCASVGIQGIA) the chain is on the extracellular side. A helical transmembrane segment spans residues 93–113 (WAFGGMIFALVYCTAGISGGH). Topologically, residues 114–133 (INPAVTFGLFLARKLSLTRA) are cytoplasmic. The NPA 1 motif lies at 115-117 (NPA). A helical membrane pass occupies residues 134 to 154 (LFYIVMQCLGAICGAGVVKGF). The Extracellular portion of the chain corresponds to 155 to 175 (QPGLYQTNGGGANVVAHGYTK). Residues 176 to 196 (GSGLGAEIVGTFVLVYTVFSA) traverse the membrane as a helical segment. Topologically, residues 197–209 (TDAKRSARDSHVP) are cytoplasmic. The helical transmembrane segment at 210–230 (ILAPLPIGFAVFLVHLATIPI) threads the bilayer. Topologically, residues 231–257 (TGTGINPARSLGAAIIYNKDHAWDDHW) are extracellular. Positions 236 to 238 (NPA) match the NPA 2 motif. A helical transmembrane segment spans residues 258–278 (IFWVGPFIGAALAALYHQIVI). Over 279 to 287 (RAIPFKSKT) the chain is Cytoplasmic. Ser-285 is modified (phosphoserine).

Belongs to the MIP/aquaporin (TC 1.A.8) family. PIP (TC 1.A.8.11) subfamily. In terms of tissue distribution, predominantly expressed in green siliques. Also expressed above ground, in roots and flower buds.

It is found in the cell membrane. Its function is as follows. Aquaporins facilitate the transport of water and small neutral solutes across cell membranes. The polypeptide is Probable aquaporin PIP1-5 (PIP1-5) (Arabidopsis thaliana (Mouse-ear cress)).